Consider the following 275-residue polypeptide: 4-hydroxy-3-methylbut-2-enyl diphosphate reductase (275 aa).

Cysteine 12 serves as a coordination point for [4Fe-4S] cluster. (2E)-4-hydroxy-3-methylbut-2-enyl diphosphate-binding residues include histidine 40 and histidine 70. Dimethylallyl diphosphate contacts are provided by histidine 40 and histidine 70. Isopentenyl diphosphate is bound by residues histidine 40 and histidine 70. Cysteine 92 contacts [4Fe-4S] cluster. Histidine 119 serves as a coordination point for (2E)-4-hydroxy-3-methylbut-2-enyl diphosphate. Histidine 119 contacts dimethylallyl diphosphate. Histidine 119 is an isopentenyl diphosphate binding site. The Proton donor role is filled by glutamate 121. Residue threonine 151 participates in (2E)-4-hydroxy-3-methylbut-2-enyl diphosphate binding. Cysteine 181 lines the [4Fe-4S] cluster pocket. The (2E)-4-hydroxy-3-methylbut-2-enyl diphosphate site is built by serine 209, serine 210, asparagine 211, and serine 251. Residues serine 209, serine 210, asparagine 211, and serine 251 each coordinate dimethylallyl diphosphate. The isopentenyl diphosphate site is built by serine 209, serine 210, asparagine 211, and serine 251.

It belongs to the IspH family. Requires [4Fe-4S] cluster as cofactor.

It carries out the reaction isopentenyl diphosphate + 2 oxidized [2Fe-2S]-[ferredoxin] + H2O = (2E)-4-hydroxy-3-methylbut-2-enyl diphosphate + 2 reduced [2Fe-2S]-[ferredoxin] + 2 H(+). It catalyses the reaction dimethylallyl diphosphate + 2 oxidized [2Fe-2S]-[ferredoxin] + H2O = (2E)-4-hydroxy-3-methylbut-2-enyl diphosphate + 2 reduced [2Fe-2S]-[ferredoxin] + 2 H(+). It functions in the pathway isoprenoid biosynthesis; dimethylallyl diphosphate biosynthesis; dimethylallyl diphosphate from (2E)-4-hydroxy-3-methylbutenyl diphosphate: step 1/1. It participates in isoprenoid biosynthesis; isopentenyl diphosphate biosynthesis via DXP pathway; isopentenyl diphosphate from 1-deoxy-D-xylulose 5-phosphate: step 6/6. Its function is as follows. Catalyzes the conversion of 1-hydroxy-2-methyl-2-(E)-butenyl 4-diphosphate (HMBPP) into a mixture of isopentenyl diphosphate (IPP) and dimethylallyl diphosphate (DMAPP). Acts in the terminal step of the DOXP/MEP pathway for isoprenoid precursor biosynthesis. This chain is 4-hydroxy-3-methylbut-2-enyl diphosphate reductase, found in Thermotoga maritima (strain ATCC 43589 / DSM 3109 / JCM 10099 / NBRC 100826 / MSB8).